The primary structure comprises 184 residues: Endothelial cell-specific molecule 1 (184 aa).

The signal sequence occupies residues 1-21 (MKSLLLLTTLLVPLHLGMAWS). The region spanning 24–102 (YAVDCPEHCD…GDEFGICKDC (79 aa)) is the IGFBP N-terminal domain. 6 disulfides stabilise this stretch: Cys28/Cys51, Cys32/Cys53, Cys37/Cys54, Cys43/Cys57, Cys65/Cys83, and Cys77/Cys99. The segment at 145-184 (RTSASHTERDSASGDGNAVREEIGEGNAARPSVMKWLNPR) is disordered. Positions 150–167 (HTERDSASGDGNAVREEI) are enriched in basic and acidic residues. Ser157 carries an O-linked (Xyl...) (chondroitin sulfate) serine glycan.

Post-translationally, O-glycosylated; contains chondroitin sulfate and dermatan sulfate.

Its subcellular location is the secreted. Involved in angiogenesis; promotes angiogenic sprouting. May have potent implications in lung endothelial cell-leukocyte interactions. The sequence is that of Endothelial cell-specific molecule 1 (Esm1) from Mus musculus (Mouse).